The chain runs to 243 residues: Protein GIGAS CELL1 (243 aa).

As to quaternary structure, interacts with APC/C activators such as FZR1, FZR2, FZR3, CDC20.1 and CDC20.5. Phosphorylated by CDKA-1 in complex with CYCA1-2. In terms of tissue distribution, expressed in rapidly dividing tissues such as shoot apical meristem and young leaves. Associated with cell division but also with specific cell types.

Negative regulator of the anaphase-promoting complex/cyclosome (APC/C) ubiquitin ligase required for proper mitotic and meiotic progression and cell fate determination. Involved in entry into both meiosis I and meiosis II. Prevents endomitosis by preferentially inhibiting APC/C(CDC20). Required for megagametophyte and endosperm development. Triggers mitotic cyclins (e.g. CYCB1-1 and CYCB1-2) accumulation. Confers immunity to bacterial pathogens (e.g. Pseudomonas syringae pv. tomato DC3000), which is associated with increased expression of disease resistance (R) genes. GIG1 and PANS1 are part of a network linking centromere cohesion and cell cycle progression through control of APC/C activity. The sequence is that of Protein GIGAS CELL1 (GIG1) from Arabidopsis thaliana (Mouse-ear cress).